Here is a 67-residue protein sequence, read N- to C-terminus: Large ribosomal subunit protein bL31 (67 aa).

Zn(2+) contacts are provided by Cys-16, Cys-18, Cys-36, and Cys-39.

It belongs to the bacterial ribosomal protein bL31 family. Type A subfamily. In terms of assembly, part of the 50S ribosomal subunit. It depends on Zn(2+) as a cofactor.

Its function is as follows. Binds the 23S rRNA. The polypeptide is Large ribosomal subunit protein bL31 (Syntrophomonas wolfei subsp. wolfei (strain DSM 2245B / Goettingen)).